The sequence spans 92 residues: Small ribosomal subunit protein bS20 (92 aa).

A disordered region spans residues 1–23; sequence MANSPSAKKRAIQAEKRRSHNAS.

This sequence belongs to the bacterial ribosomal protein bS20 family.

Its function is as follows. Binds directly to 16S ribosomal RNA. This is Small ribosomal subunit protein bS20 from Stutzerimonas stutzeri (strain A1501) (Pseudomonas stutzeri).